The following is a 374-amino-acid chain: Putative G-protein coupled receptor-like protein B0244.6 (374 aa).

Residues 1-54 (MTQNHYTTSIFANCSKHYEFEILLETCTNSTNPCHAVSQIQSAITIAYVDYYTS) lie on the Extracellular side of the membrane. A helical transmembrane segment spans residues 55–75 (VALFSIAALLDIYCLIITIPL). The Cytoplasmic segment spans residues 76–86 (YRRMKDDSKKK). Residues 87–107 (YVFLITRCISGLLLVVAWLLI) traverse the membrane as a helical segment. At 108-137 (QCIYLRFIAPSQDNLPYYVLALALNIGSTY) the chain is on the extracellular side. The chain crosses the membrane as a helical span at residues 138–158 (VLLGSYVGMAGILYLGVLNPI). Over 159 to 169 (AFNQHLTLRIV) the chain is Cytoplasmic. A helical transmembrane segment spans residues 170 to 190 (YIAVCIIFVISIFISIPLAIF). Over 191–216 (QALMTVPTSSMSCTDTACAPLITLIN) the chain is Extracellular. Residues 217 to 237 (FVLVFGSLITTTLTLTFVLIS) form a helical membrane-spanning segment. Over 238–262 (LCRHRKEFKKLDTTSNTSLNSAVRL) the chain is Cytoplasmic. A helical membrane pass occupies residues 263-283 (LKFTLFAVLLLVAAEVIPFVI). The Extracellular portion of the chain corresponds to 284 to 304 (SETKKKHSVVTGCYYFYHSGK). A helical transmembrane segment spans residues 305–325 (VIQYAVFALTESSIWSIALII). Over 326–374 (DPLINIIFDRTVSKKATDQVKWMRKSCVGLVRKVTKRSNPENFTETSEI) the chain is Cytoplasmic.

The protein belongs to the G-protein coupled receptor 1 family. B0244 subfamily.

The protein localises to the cell membrane. This is Putative G-protein coupled receptor-like protein B0244.6 from Caenorhabditis elegans.